Consider the following 456-residue polypeptide: Cytochrome P450 monooxygenase avaH (456 aa).

A helical transmembrane segment spans residues 243–263 (LMSYFVSVFLVNVALFNAVSI). Cysteine 403 contacts heme.

Belongs to the cytochrome P450 family. Heme serves as cofactor.

The protein resides in the membrane. It functions in the pathway secondary metabolite biosynthesis. Functionally, cytochrome P450 monooxygenase; part of the cluster that mediates the biosynthesis of a highly modified cyclo-arginine-tryptophan dipeptide (cRW). The first step of the pathway is perfornmed by the arginine-containing cyclodipeptide synthase (RCPDS) avaA that acts as the scaffold-generating enzyme and is responsible for formation of the cyclo-Arg-Trp (cRW) diketopiperazine. AvaB then acts as a multifunctional flavoenzyme that is responsible for generating the cyclo-Arg-formylkynurenine DKP, which can be deformylated by avaC. AvaB then further catalyzes an additional N-oxidation followed by cyclization and dehydration. The next step is an N-acetylation of the guanidine group catalyzed by the arginine N-acetyltransferase avaD. The roles of the additional enzymes identified within the ava cluster still have to be determined. The protein is Cytochrome P450 monooxygenase avaH of Aspergillus versicolor.